The sequence spans 370 residues: Protein Brevis radix-like 3 (370 aa).

One can recognise a BRX 1 domain in the interval K140–N221. Polar residues-rich tracts occupy residues L231–K248 and P266–D291. Residues L231–E316 are disordered. The BRX 2 domain occupies S315–L370.

Belongs to the BRX family. In terms of tissue distribution, expressed in roots.

It localises to the nucleus. The sequence is that of Protein Brevis radix-like 3 (BRXL3) from Arabidopsis thaliana (Mouse-ear cress).